We begin with the raw amino-acid sequence, 382 residues long: D-galactonate dehydratase (382 aa).

Asp183 provides a ligand contact to Mg(2+). The active-site Proton donor is the His185. Mg(2+) contacts are provided by Glu209 and Glu235. Catalysis depends on His285, which acts as the Proton acceptor.

Belongs to the mandelate racemase/muconate lactonizing enzyme family. GalD subfamily. Mg(2+) serves as cofactor.

It carries out the reaction D-galactonate = 2-dehydro-3-deoxy-D-galactonate + H2O. It participates in carbohydrate acid metabolism; D-galactonate degradation; D-glyceraldehyde 3-phosphate and pyruvate from D-galactonate: step 1/3. Its function is as follows. Catalyzes the dehydration of D-galactonate to 2-keto-3-deoxy-D-galactonate. This is D-galactonate dehydratase from Ralstonia nicotianae (strain ATCC BAA-1114 / GMI1000) (Ralstonia solanacearum).